We begin with the raw amino-acid sequence, 133 residues long: Osteocrin (133 aa).

Positions 1–27 (MLDWRLASAHFILAVTLTLWSSGKVLS) are cleaved as a signal peptide. Arginine amide is present on Arg132.

This sequence belongs to the Osteocrin family. As to quaternary structure, interacts with NPR3. As to expression, enriched in neocortical regions of the developing cerebral cortex. Not expressed in other compartments of the neocortical wall or in brain regions such as the hippocampus, striatum, mediodorsal nucleus of the thalamus and cerebellum. Also expressed in bone. In developing neonatal rib bone, present at high level in osteoblasts on bone-forming surfaces, in newly incorporated osteocytes and in some late hypertrophic chondrocytes (at protein level). In adult bone, localizes specifically to osteoblasts and young osteocytes at bone-forming sites (at protein level).

The protein resides in the secreted. Functionally, hormone that acts as a regulator of dendritic growth in the developing cerebral cortex in response to sensory experience. Induced in the brain following membrane depolarization and inhibits dendritic branching in neurons of the developing cortex. Probably acts by binding to natriuretic peptide receptor NPR3/NPR-C, thereby preventing binding between NPR3/NPR-C and natriuretic peptides, leading to increase cGMP production. The protein is Osteocrin of Homo sapiens (Human).